The sequence spans 593 residues: Melanopsin-A (593 aa).

At 1-77 the chain is on the extracellular side; sequence MMSGAAHSVR…VDVPDHAHYT (77 aa). The chain crosses the membrane as a helical span at residues 78 to 98; it reads IGAVILTVGITGMLGNFLVIY. Topologically, residues 99–112 are cytoplasmic; it reads AFSRSRTLRTPANL. The helical transmembrane segment at 113–133 threads the bilayer; that stretch reads FIINLAITDFLMCATQAPIFF. The Extracellular portion of the chain corresponds to 134–150; it reads TTSMHKRWIFGEKGCEL. A disulfide bridge links C148 with C226. A helical membrane pass occupies residues 151-171; the sequence is YAFCGALFGICSMITLMVIAV. The Cytoplasmic segment spans residues 172-191; the sequence is DRYFVITRPLASIGVLSQKR. The helical transmembrane segment at 192–212 threads the bilayer; sequence ALLILLVAWVYSLGWSLPPFF. The Extracellular segment spans residues 213 to 243; that stretch reads GWSAYVPEGLLTSCTWDYMTFTPSVRAYTML. A helical transmembrane segment spans residues 244 to 264; it reads LFIFVFFIPLIVIIYCYFFIF. Residues 265 to 300 are Cytoplasmic-facing; sequence RSIRTTNEAVGKINGDNKRDSMKRFQRLKNEWKMAK. The chain crosses the membrane as a helical span at residues 301–321; sequence IALIVILMYVISWSPYSTVAL. Residues 322–336 lie on the Extracellular side of the membrane; that stretch reads TAFAGYSDFLTPYMN. The chain crosses the membrane as a helical span at residues 337–357; the sequence is SVPAVIAKASAIHNPIIYAIT. At K344 the chain carries N6-(retinylidene)lysine. Residues 358 to 593 lie on the Cytoplasmic side of the membrane; sequence HPKYRLAIAK…HIDNHRPQYL (236 aa). Disordered regions lie at residues 397–449 and 547–593; these read TVTS…RQVS and RSNV…PQYL. Residues 414–449 are compositionally biased toward polar residues; it reads TGKSRLSSASDSESGWTDTEADLSSMSSRPASRQVS. Over residues 581 to 593 the composition is skewed to basic and acidic residues; the sequence is ESGHIDNHRPQYL.

Belongs to the G-protein coupled receptor 1 family. Opsin subfamily.

It is found in the cell membrane. Its function is as follows. Photoreceptor implicated in non-image-forming responses to light. May be able to isomerize covalently bound all-trans retinal back to 11-cis retinal. The sequence is that of Melanopsin-A (opn4a) from Danio rerio (Zebrafish).